The sequence spans 211 residues: MPLPGFTKSDFETFLIDGLEERMAAIRSNIQPKFQVIGAELRDELSTLLGNEMFLHIAQHARRTTNPPNDTWLAVAGNKRGYKKHPHFQVGLFDDHLFIWLAFIYELPEKGNIAKTFLENKPLIEEVVPSDYVVSIDHTKKEANPLSELDLTQSLERFRDVKKAEWLVGRHFAKGSETVENGEQLMEAIRQTVKTLLPLYQLSLTAGAPTR.

Belongs to the UPF0637 family.

This is UPF0637 protein ABC2405 from Shouchella clausii (strain KSM-K16) (Alkalihalobacillus clausii).